A 195-amino-acid chain; its full sequence is Probable DNA-directed RNA polymerase subunit delta (195 aa).

The 70-residue stretch at 14-83 (LSMIEVARAI…GDNKWGLRSW (70 aa)) folds into the HTH HARE-type domain. Composition is skewed to acidic residues over residues 120–138 (DSDA…DAYE) and 145–195 (YDDE…TSEE). Residues 120–195 (DSDAIDYNAD…SDDDAETSEE (76 aa)) form a disordered region.

It belongs to the RpoE family. In terms of assembly, RNAP is composed of a core of 2 alpha, a beta and a beta' subunits. The core is associated with a delta subunit and one of several sigma factors.

Participates in both the initiation and recycling phases of transcription. In the presence of the delta subunit, RNAP displays an increased specificity of transcription, a decreased affinity for nucleic acids, and an increased efficiency of RNA synthesis because of enhanced recycling. The chain is Probable DNA-directed RNA polymerase subunit delta from Streptococcus pneumoniae serotype 2 (strain D39 / NCTC 7466).